The sequence spans 456 residues: MLRYYGATRNLPLVFSINKLMLRASSFTRPFHYSSYSLQNGDTPDKGSTNKNEIRTPNNAVWKENIELQWQHLKKKLNELYSRFNFHRDQLSFQVNKAKKSIQEANRKLSEQENEINDSRLNYNKDELTSAKIEGLPSEREQHRKKWSRKLEFYFDSLQETLFTATRALNDVTGYSGIQKLKSSISLMEKKLEATKKEHKLFKAQYANAIDERAQSQREVNELLQRQSAWSSSDLERFTQLYKNDALNARQEQELKNKVKEIESKEEQLNDDLYRAILTRYHEEQIWSDKIRRTSTWGTFILMGMNIFLFIVLQLLLEPWKRKRLVGSFEDKVKSALNEYAKEQNMKMDKLLPGKSSEVTDQGNTENSIVEEHIEQRGECKINTAEIDRPEVATAETTTTEMKSFRDIWERIKALFVTLKSIQYRKLDAPLVFDTLEFYLYSISLVSMTILVSGLI.

The N-terminal 30 residues, 1-30, are a transit peptide targeting the mitochondrion; it reads MLRYYGATRNLPLVFSINKLMLRASSFTRP. Residues 31-296 are Mitochondrial matrix-facing; it reads FHYSSYSLQN…WSDKIRRTST (266 aa). Coiled-coil stretches lie at residues 71–128 and 178–277; these read QHLK…KDEL and IQKL…YRAI. The chain crosses the membrane as a helical span at residues 297–317; sequence WGTFILMGMNIFLFIVLQLLL. At 318 to 435 the chain is on the mitochondrial intermembrane side; it reads EPWKRKRLVG…KLDAPLVFDT (118 aa). Residues 436-456 traverse the membrane as a helical segment; it reads LEFYLYSISLVSMTILVSGLI.

The protein belongs to the SHE9 family. Homooligomer. Participates in a complex of about 300 kDa.

Its subcellular location is the mitochondrion inner membrane. Functionally, required for the maintenance of the structure of the mitochondrial inner membrane. Involved in mitochondrial morphology. Causes growth arrest when highly overexpressed. In Saccharomyces cerevisiae (strain ATCC 204508 / S288c) (Baker's yeast), this protein is Sensitive to high expression protein 9, mitochondrial (SHE9).